The primary structure comprises 365 residues: 3-dehydroquinate synthase (365 aa).

NAD(+) contacts are provided by residues glycine 106–aspartate 110, threonine 130–threonine 131, lysine 142, lysine 151, and phenylalanine 169–threonine 172. The Zn(2+) site is built by glutamate 184, histidine 247, and histidine 264.

The protein belongs to the sugar phosphate cyclases superfamily. Dehydroquinate synthase family. It depends on NAD(+) as a cofactor. Co(2+) is required as a cofactor. Requires Zn(2+) as cofactor.

It is found in the cytoplasm. The catalysed reaction is 7-phospho-2-dehydro-3-deoxy-D-arabino-heptonate = 3-dehydroquinate + phosphate. Its pathway is metabolic intermediate biosynthesis; chorismate biosynthesis; chorismate from D-erythrose 4-phosphate and phosphoenolpyruvate: step 2/7. Catalyzes the conversion of 3-deoxy-D-arabino-heptulosonate 7-phosphate (DAHP) to dehydroquinate (DHQ). The polypeptide is 3-dehydroquinate synthase (Listeria monocytogenes serovar 1/2a (strain ATCC BAA-679 / EGD-e)).